The chain runs to 497 residues: Probable cytosol aminopeptidase (497 aa).

Residues Lys-267 and Asp-272 each contribute to the Mn(2+) site. Lys-279 is an active-site residue. The Mn(2+) site is built by Asp-290, Asp-349, and Glu-351. Residue Arg-353 is part of the active site.

This sequence belongs to the peptidase M17 family. It depends on Mn(2+) as a cofactor.

It localises to the cytoplasm. The enzyme catalyses Release of an N-terminal amino acid, Xaa-|-Yaa-, in which Xaa is preferably Leu, but may be other amino acids including Pro although not Arg or Lys, and Yaa may be Pro. Amino acid amides and methyl esters are also readily hydrolyzed, but rates on arylamides are exceedingly low.. It carries out the reaction Release of an N-terminal amino acid, preferentially leucine, but not glutamic or aspartic acids.. In terms of biological role, presumably involved in the processing and regular turnover of intracellular proteins. Catalyzes the removal of unsubstituted N-terminal amino acids from various peptides. This is Probable cytosol aminopeptidase from Nitrosomonas eutropha (strain DSM 101675 / C91 / Nm57).